The chain runs to 98 residues: NADH-ubiquinone oxidoreductase chain 4L (98 aa).

3 consecutive transmembrane segments (helical) span residues 1-21 (MIPTYMNIMLAFTISLLGMLT), 27-47 (VASLLCLEGMMMSLFIMTTLI), and 61-81 (IILLVFAACEAAVGLALLISI).

This sequence belongs to the complex I subunit 4L family. As to quaternary structure, core subunit of respiratory chain NADH dehydrogenase (Complex I) which is composed of 45 different subunits.

It localises to the mitochondrion inner membrane. It carries out the reaction a ubiquinone + NADH + 5 H(+)(in) = a ubiquinol + NAD(+) + 4 H(+)(out). Core subunit of the mitochondrial membrane respiratory chain NADH dehydrogenase (Complex I) which catalyzes electron transfer from NADH through the respiratory chain, using ubiquinone as an electron acceptor. Part of the enzyme membrane arm which is embedded in the lipid bilayer and involved in proton translocation. The polypeptide is NADH-ubiquinone oxidoreductase chain 4L (MT-ND4L) (Macaca nigra (Celebes black macaque)).